Consider the following 270-residue polypeptide: 1-deoxy-11-beta-hydroxypentalenate dehydrogenase (270 aa).

12-36 contributes to the NAD(+) binding site; sequence GAASGIGFALSARLAQAGARVVMTD. Ser144 serves as a coordination point for substrate. The Proton acceptor role is filled by Tyr157. Residue Lys161 coordinates NAD(+).

The protein belongs to the short-chain dehydrogenases/reductases (SDR) family.

It catalyses the reaction 1-deoxy-11beta-hydroxypentalenate + NAD(+) = 1-deoxy-11-oxopentalenate + NADH + H(+). The protein operates within antibiotic biosynthesis; neopentalenolactone biosynthesis. Catalyzes the oxidation of 1-deoxy-11-beta-hydroxypentalenic acid to 1-deoxy-11-oxopentalenic acid in the biosynthesis of neopentalenolactone antibiotic. This Streptomyces avermitilis (strain ATCC 31267 / DSM 46492 / JCM 5070 / NBRC 14893 / NCIMB 12804 / NRRL 8165 / MA-4680) protein is 1-deoxy-11-beta-hydroxypentalenate dehydrogenase (ptlF).